Consider the following 432-residue polypeptide: MRVVVLGSGVVGVTSAWYLCQAGHEVTVIDREPGSALETSAANAGQISPGYAAPWAAPGVPLKAIKWMFQRHAPLAISLDGTPSQLKWMWQMLRNCDTRHYMENKGRMVRLAEYSRDCLKTLRASTGIEYEGRQGGTLQLFRTAQQYENATRDIAVLEDAGVPYQLLDASQLAQVEPALAEVAHKLTGGLRLPNDETGDCQLFTQRLAKMCEQAGVTFRYNTPVDKLLSEGGKIYGVKCGDEVIKADSYVMAFGSYSTAMLKGLLDIPVYPLKGYSLTIPVKEDNGAPVSTILDETYKIAITRFDNRIRVGGMAEIVGFNTELLQPRRETLEMVVRDLFPRGGFIEQATFWTGLRPMTPDGTPIVGRTPFKNLWTNTGHGTLGWTMACGSGQLLSDLISGRTPAIPFDDLSAARYQSGFSPSRPQHLHGAHN.

3–17 (VVVLGSGVVGVTSAW) is a binding site for FAD.

It belongs to the DadA oxidoreductase family. FAD serves as cofactor.

The catalysed reaction is a D-alpha-amino acid + A + H2O = a 2-oxocarboxylate + AH2 + NH4(+). The protein operates within amino-acid degradation; D-alanine degradation; NH(3) and pyruvate from D-alanine: step 1/1. In terms of biological role, oxidative deamination of D-amino acids. This Enterobacter sp. (strain 638) protein is D-amino acid dehydrogenase.